A 625-amino-acid chain; its full sequence is MNQLTNLSSAEISAQHEQDAKDLTRILPASKKVYIEGSRPDIQVPMREISLTDTPTGLGGEHNPPIMVYDTSGVYTDPNVQIDLNKGLPSVRQKWIEERNDTDVLSGLTSKFGQERLKDIRTADIRFAHIQNPRRAKAGKNVTQMHYAKQGIITPEMEYIAIRENQRQREAVDMRQHPGQNFGAKNLKEITPEFVRQEVAEGRAIIPANINHPELEPMIIGRNFLVKINANIGNSALGSSIDEEVAKMTWATRWGADTIMDLSTGKNIHETREWIIRNSPVPIGTVPIYQALEKVDGVAENLTWEIFKDTLIEQAEQGVDYFTIHAGVLLRYVPLTANRLTGIVSRGGSIMAQWCLAHHEENFLYTHFDEICEIMKAYDVSFSLGDGLRPGCIQDANDEAQFSELKTLGELTHRAWEHDVQVMIEGPGHVPMHMIKENMDLQLEVCKEAPFYTLGPLTTDIAPGYDHITSAIGAAMIGWYGTAMLCYVTPKEHLGLPNKKDVKDGIITYKIAAHAADLAKGHPGAQVRDNALSKARFEFRWDDQFNLSLDPDTARSMHDETLPKEAHKSAHFCSMCGPKFCSMKITQNVRDYANNLTNSDSEVEEGLKAMKEVYQEQGQKLYHKV.

Substrate-binding positions include N231, M260, Y289, H325, S345–G347, D386–R389, and E425. Residue H429 coordinates Zn(2+). Residue Y452 coordinates substrate. H493 contributes to the Zn(2+) binding site. Positions 573, 576, and 581 each coordinate [4Fe-4S] cluster.

It belongs to the ThiC family. As to quaternary structure, homodimer. The cofactor is [4Fe-4S] cluster.

It catalyses the reaction 5-amino-1-(5-phospho-beta-D-ribosyl)imidazole + S-adenosyl-L-methionine = 4-amino-2-methyl-5-(phosphooxymethyl)pyrimidine + CO + 5'-deoxyadenosine + formate + L-methionine + 3 H(+). The protein operates within cofactor biosynthesis; thiamine diphosphate biosynthesis. Catalyzes the synthesis of the hydroxymethylpyrimidine phosphate (HMP-P) moiety of thiamine from aminoimidazole ribotide (AIR) in a radical S-adenosyl-L-methionine (SAM)-dependent reaction. The sequence is that of Phosphomethylpyrimidine synthase from Acinetobacter baumannii (strain AB0057).